The following is a 431-amino-acid chain: Foot protein 1 variant 2 (431 aa).

The signal sequence occupies residues 1–20 (MARNMNILTLFAVLLGSASA). 3',4'-dihydroxyphenylalanine is present on Y22. P33 carries the post-translational modification 4-hydroxyproline. Residues 41–50 (VPPPAWTAWK) form an A-1; approximate repeat. A 13 X 10 AA A-P-P-P-A-W-T-A-W-K region spans residues 41–270 (VPPPAWTAWK…APPPAWTAWK (230 aa)). 7'-hydroxytryptophan is present on residues W46, W49, W56, and W59. C-linked (Man) hydroxytryptophan glycans are attached at residues W46, W49, W56, and W59. Residues 51–60 (AHPPAWTAWK) form an A-2; approximate repeat. One copy of the B-1 repeat lies at 61-70 (ATPKPWTAWK). The tract at residues 61 to 310 (ATPKPWTAWK…ATPKPWTAWR (250 aa)) is 27 X 10 AA A-T-P-K-P-W-T-A-W-K. 4-hydroxyproline is present on P65. C-linked (Man) tryptophan glycosylation occurs at W66. A 7'-hydroxytryptophan modification is found at W69. A glycan (C-linked (Man) hydroxytryptophan) is linked at W69. The A-3 repeat unit spans residues 71 to 80 (APPPAWTAWK). 4-hydroxyproline is present on residues P72, P73, and P74. Residues W76 and W79 each carry the 7'-hydroxytryptophan modification. C-linked (Man) hydroxytryptophan glycosylation is found at W76 and W79. A B-2 repeat occupies 81–90 (ATPKPWTAWK). 4-hydroxyproline is present on P85. W86 carries C-linked (Man) tryptophan glycosylation. 7'-hydroxytryptophan is present on W89. W89 carries a C-linked (Man) hydroxytryptophan glycan. Residues 91–100 (APPPTWTAWK) form an A-4; approximate repeat. A 4-hydroxyproline mark is found at P92, P93, and P94. Residues W96 and W99 each carry the 7'-hydroxytryptophan modification. C-linked (Man) hydroxytryptophan glycosylation is found at W96 and W99. The stretch at 101–110 (ATPKPWTAWK) is one B-3 repeat. P105 is subject to 4-hydroxyproline. Residue W106 is glycosylated (C-linked (Man) tryptophan). W109 is modified (7'-hydroxytryptophan). C-linked (Man) hydroxytryptophan glycosylation occurs at W109. An A-5; approximate repeat occupies 111–120 (APPPVWTAWK). A 4-hydroxyproline mark is found at P112, P113, and P114. W116 and W119 each carry 7'-hydroxytryptophan. C-linked (Man) hydroxytryptophan glycosylation is found at W116 and W119. Residues 121–130 (ATPKPRTAWK) form a B-4; approximate repeat. P125 is modified (4-hydroxyproline). W129 bears the 7'-hydroxytryptophan mark. C-linked (Man) hydroxytryptophan glycosylation is present at W129. The A-6; approximate repeat unit spans residues 131–140 (APPPTWTAWK). P132, P133, and P134 each carry 4-hydroxyproline. W136 and W139 each carry 7'-hydroxytryptophan. C-linked (Man) hydroxytryptophan glycosylation is found at W136 and W139. Residues 141–150 (AAPKPWTAWK) form a B-5; approximate repeat. Residue P145 is modified to 4-hydroxyproline. A C-linked (Man) tryptophan glycan is attached at W146. Residue W149 is modified to 7'-hydroxytryptophan. W149 carries C-linked (Man) hydroxytryptophan glycosylation. The stretch at 151-160 (ATPKPWTAWK) is one B-6 repeat. The residue at position 155 (P155) is a 4-hydroxyproline. C-linked (Man) tryptophan glycosylation occurs at W156. W159 carries the post-translational modification 7'-hydroxytryptophan. The C-linked (Man) hydroxytryptophan glycan is linked to W159. The stretch at 161–170 (APPPAWTAWK) is one A-7 repeat. 3 positions are modified to 4-hydroxyproline: P162, P163, and P164. 7'-hydroxytryptophan is present on residues W166 and W169. C-linked (Man) hydroxytryptophan glycans are attached at residues W166 and W169. Residues 171 to 180 (ATPKPWTAWK) form a B-7 repeat. P175 is subject to 4-hydroxyproline. Residue W176 is glycosylated (C-linked (Man) tryptophan). 7'-hydroxytryptophan is present on W179. W179 is a glycosylation site (C-linked (Man) hydroxytryptophan). Residues 181 to 190 (ATPKPWTAWK) form a B-8 repeat. P185 carries the post-translational modification 4-hydroxyproline. W186 carries C-linked (Man) tryptophan glycosylation. W189 bears the 7'-hydroxytryptophan mark. C-linked (Man) hydroxytryptophan glycosylation occurs at W189. A B-9 repeat occupies 191–200 (ATPKPWTAWK). P195 is subject to 4-hydroxyproline. A glycan (C-linked (Man) tryptophan) is linked at W196. At W199 the chain carries 7'-hydroxytryptophan. C-linked (Man) hydroxytryptophan glycosylation occurs at W199. A B-10; approximate repeat occupies 201–210 (ATPKPWTVWK). The residue at position 205 (P205) is a 4-hydroxyproline. A glycan (C-linked (Man) tryptophan) is linked at W206. W209 is modified (7'-hydroxytryptophan). A C-linked (Man) hydroxytryptophan glycan is attached at W209. A B-11 repeat occupies 211–220 (ATPKPWTAWK). At P215 the chain carries 4-hydroxyproline. A glycan (C-linked (Man) tryptophan) is linked at W216. W219 is subject to 7'-hydroxytryptophan. A glycan (C-linked (Man) hydroxytryptophan) is linked at W219. Residues 221–230 (APPPAWTAWK) form an A-8 repeat. 4-hydroxyproline is present on residues P222, P223, and P224. 7'-hydroxytryptophan occurs at positions 226 and 229. C-linked (Man) hydroxytryptophan glycosylation is found at W226 and W229. The B-12 repeat unit spans residues 231-240 (ATPKPWTAWK). A 4-hydroxyproline modification is found at P235. A C-linked (Man) tryptophan glycan is attached at W236. At W239 the chain carries 7'-hydroxytryptophan. The C-linked (Man) hydroxytryptophan glycan is linked to W239. The stretch at 241–250 (APPPAWTAWK) is one A-9 repeat. 3 positions are modified to 4-hydroxyproline: P242, P243, and P244. 7'-hydroxytryptophan is present on residues W246 and W249. C-linked (Man) hydroxytryptophan glycosylation is found at W246 and W249. A B-13 repeat occupies 251-260 (ATPKPWTAWK). P255 is subject to 4-hydroxyproline. C-linked (Man) tryptophan glycosylation is present at W256. Position 259 is a 7'-hydroxytryptophan (W259). The C-linked (Man) hydroxytryptophan glycan is linked to W259. The A-10 repeat unit spans residues 261 to 270 (APPPAWTAWK). Residues P262, P263, and P264 each carry the 4-hydroxyproline modification. Residues W266 and W269 each carry the 7'-hydroxytryptophan modification. Residues W266 and W269 are each glycosylated (C-linked (Man) hydroxytryptophan). Residues 271 to 280 (ATPKPWTAWK) form a B-14 repeat. The residue at position 275 (P275) is a 4-hydroxyproline. C-linked (Man) tryptophan glycosylation is present at W276. W279 carries the post-translational modification 7'-hydroxytryptophan. W279 carries C-linked (Man) hydroxytryptophan glycosylation. Residues 281 to 290 (ATPKPWTAWK) form a B-15 repeat. At P285 the chain carries 4-hydroxyproline. A C-linked (Man) tryptophan glycan is attached at W286. A 7'-hydroxytryptophan modification is found at W289. W289 is a glycosylation site (C-linked (Man) hydroxytryptophan). A B-16 repeat occupies 291–300 (ATPKPWTAWK). P295 is subject to 4-hydroxyproline. C-linked (Man) tryptophan glycosylation is present at W296. W299 is subject to 7'-hydroxytryptophan. W299 carries C-linked (Man) hydroxytryptophan glycosylation. A B-17; approximate repeat occupies 301–310 (ATPKPWTAWR). Residue P305 is modified to 4-hydroxyproline. C-linked (Man) tryptophan glycosylation is present at W306. W309 is subject to 7'-hydroxytryptophan. The C-linked (Man) hydroxytryptophan glycan is linked to W309. Positions 322–377 (GHGYGGYGKPGKPGKPGSKGPRGPAGPPGATGKTGRTGATGKRGPPGYPGKPGVPG) are disordered. Over residues 323–332 (HGYGGYGKPG) the composition is skewed to gly residues. The Collagen-like domain maps to 329–380 (GKPGKPGKPGSKGPRGPAGPPGATGKTGRTGATGKRGPPGYPGKPGVPGRNG). Residues 336–366 (KPGSKGPRGPAGPPGATGKTGRTGATGKRGP) are compositionally biased toward low complexity. 4-hydroxyproline is present on residues P367, P370, and P376.

As to expression, produced by the byssal gland.

The protein resides in the secreted. Its function is as follows. Provides adhesiveness to the mussel's foot. Mussels produce one of the strongest water insoluble glues. The mussel's adhesive is a bundle of threads, called a byssus, formed by a fibrous collagenous core coated with adhesive proteins. The sequence is that of Foot protein 1 variant 2 from Perna viridis (Asian green mussel).